Consider the following 301-residue polypeptide: Cell division protein kinase 2 homolog CRK1 (301 aa).

Positions tyrosine 5–phenylalanine 297 constitute a Protein kinase domain. Residues isoleucine 11 to valine 19 and lysine 34 each bind ATP. Aspartate 127 functions as the Proton acceptor in the catalytic mechanism. The residue at position 160 (threonine 160) is a Phosphothreonine; by CAK.

This sequence belongs to the protein kinase superfamily. CMGC Ser/Thr protein kinase family. CDC2/CDKX subfamily. As to quaternary structure, forms a stable but non-covalent complex with a regulatory subunit and with a cyclin.

The enzyme catalyses [DNA-directed RNA polymerase] + ATP = phospho-[DNA-directed RNA polymerase] + ADP + H(+). Phosphorylation at Thr-15 or Tyr-16 inactivates the enzyme, while phosphorylation at Thr-160 activates it. May be involved in some stage-specific role in the promastigote cell cycle. This chain is Cell division protein kinase 2 homolog CRK1 (CRK1), found in Leishmania mexicana.